A 374-amino-acid chain; its full sequence is Probable dual-specificity RNA methyltransferase RlmN (374 aa).

Residues 1 to 17 (MEKNEISEERRTQEKEK) are compositionally biased toward basic and acidic residues. The segment at 1 to 22 (MEKNEISEERRTQEKEKQHGHR) is disordered. Residue Glu119 is the Proton acceptor of the active site. Residues 125-360 (SEERITACIS…VTVRKSQGAT (236 aa)) form the Radical SAM core domain. The cysteines at positions 132 and 365 are disulfide-linked. 3 residues coordinate [4Fe-4S] cluster: Cys139, Cys143, and Cys146. Residues 190–191 (GE), Ser223, 246–248 (SLH), and Asn322 each bind S-adenosyl-L-methionine. The S-methylcysteine intermediate role is filled by Cys365.

This sequence belongs to the radical SAM superfamily. RlmN family. [4Fe-4S] cluster serves as cofactor.

It localises to the cytoplasm. The enzyme catalyses adenosine(2503) in 23S rRNA + 2 reduced [2Fe-2S]-[ferredoxin] + 2 S-adenosyl-L-methionine = 2-methyladenosine(2503) in 23S rRNA + 5'-deoxyadenosine + L-methionine + 2 oxidized [2Fe-2S]-[ferredoxin] + S-adenosyl-L-homocysteine. It carries out the reaction adenosine(37) in tRNA + 2 reduced [2Fe-2S]-[ferredoxin] + 2 S-adenosyl-L-methionine = 2-methyladenosine(37) in tRNA + 5'-deoxyadenosine + L-methionine + 2 oxidized [2Fe-2S]-[ferredoxin] + S-adenosyl-L-homocysteine. Functionally, specifically methylates position 2 of adenine 2503 in 23S rRNA and position 2 of adenine 37 in tRNAs. This Chlorobaculum tepidum (strain ATCC 49652 / DSM 12025 / NBRC 103806 / TLS) (Chlorobium tepidum) protein is Probable dual-specificity RNA methyltransferase RlmN.